A 626-amino-acid chain; its full sequence is Probable potassium transport system protein Kup 3 (626 aa).

Helical transmembrane passes span 10-30 (LATL…TSPL), 51-71 (VLGI…LKYV), 107-127 (VLLG…TPAI), 141-161 (PAFK…LFIF), 173-193 (FGPV…AAIV), 216-236 (LLGF…EALY), 251-271 (WLGY…ALLL), 293-313 (LVAL…SGAF), 341-361 (IYLP…VIEF), 371-391 (YGIA…AVAV), 401-421 (AMLG…ANSV), and 423-443 (IADG…LLTT).

It belongs to the HAK/KUP transporter (TC 2.A.72) family.

Its subcellular location is the cell inner membrane. The catalysed reaction is K(+)(in) + H(+)(in) = K(+)(out) + H(+)(out). Its function is as follows. Transport of potassium into the cell. Likely operates as a K(+):H(+) symporter. This is Probable potassium transport system protein Kup 3 from Dechloromonas aromatica (strain RCB).